A 51-amino-acid polypeptide reads, in one-letter code: Large ribosomal subunit protein eL39 (51 aa).

The protein belongs to the eukaryotic ribosomal protein eL39 family.

This chain is Large ribosomal subunit protein eL39 (rpl39e), found in Pyrobaculum aerophilum (strain ATCC 51768 / DSM 7523 / JCM 9630 / CIP 104966 / NBRC 100827 / IM2).